Here is a 2410-residue protein sequence, read N- to C-terminus: Dual specificity protein kinase splA (2410 aa).

6 disordered regions span residues 29 to 48, 66 to 103, 116 to 158, 187 to 252, 508 to 647, and 659 to 820; these read NNNNNNNNNNNNNNNNNNNN, NHPSLKIPPPPSPTSPYVRRHARQHSRSNSSNSPGELT, NTQT…SNGG, NISP…SSGI, QQLQ…VPSA, and SSSS…KKEG. Composition is skewed to low complexity over residues 116-128 and 137-158; these read NTQTSPPTSTSPN and NTTTSSTTITRNSNNINNSNGG. Residues 514 to 525 show a composition bias toward pro residues; the sequence is QPPPTIQPPPQQ. The segment covering 530–544 has biased composition (low complexity); sequence LRGNRSSGNLSGLNS. Residues 545 to 554 show a composition bias toward polar residues; it reads FSLKQSTDSL. Low complexity predominate over residues 560-583; the sequence is SQQSTVSSNSTPIAATPISPLTAP. Over residues 584–594 the composition is skewed to pro residues; sequence TSPPPPPPPPT. Low complexity-rich tracts occupy residues 595-618, 627-639, 659-686, 701-738, 746-759, and 777-813; these read NFNSKFNNNNNNNINNSSNNNTTV, VLPKSPSSRSPRP, SSSSNISTNNTDLNLSSSSSSSPPLNIS, SPSYKQQQQQQQQQQQQQQQLNNSSNSSYSPKPRSPSV, ISPNSSPIGSPNIS, and NTNNNNNNNNNNNNNNNNNNNNNNNNNNNNNNNNNTN. 2 B30.2/SPRY domains span residues 822-1004 and 1020-1209; these read SSWF…GPFS and DSGG…PPFK. 2 disordered regions span residues 1228–1428 and 1493–1512; these read PNGN…NNIY and SLGVSFSSPSSSPKTSPRKI. 4 stretches are compositionally biased toward low complexity: residues 1229–1359, 1373–1399, 1419–1428, and 1493–1507; these read NGNN…NNNI, SSTGSLGGNNSSGNNNSSSGSIGNNSS, SSTNNNNNIY, and SLGVSFSSPSSSPKT. Positions 1481-1703 constitute a B30.2/SPRY 3 domain; sequence PITASTNHTL…CVATFPGGHF (223 aa). In terms of domain architecture, SAM spans 1734-1798; the sequence is WAPNDVAIWL…INRLNRMIQI (65 aa). The tract at residues 1862-2105 is disordered; sequence KSYTQKEIED…PPPPPQLPVR (244 aa). The segment covering 1865–1874 has biased composition (basic and acidic residues); it reads TQKEIEDRNR. A compositionally biased stretch (low complexity) spans 1951 to 1967; that stretch reads SVSSTGGSSGFLTFPSS. The span at 1989 to 2002 shows a compositional bias: polar residues; the sequence is ITSNYKGITNTGQP. Residues 2020 to 2070 show a composition bias toward low complexity; it reads SNNGNNGNNNNNNNNNNIKANQQQQQQSSYQQSQTQQQQQHITSTSTSTTN. Positions 2089-2102 are enriched in pro residues; that stretch reads PSRPPPPPPPPPQL. In terms of domain architecture, Protein kinase spans 2115 to 2387; sequence LEFGQTIGKG…FKQIIVHLKE (273 aa). Residues 2121 to 2129 and lysine 2142 each bind ATP; that span reads IGKGFFGEV. Aspartate 2243 (proton acceptor) is an active-site residue.

The protein belongs to the protein kinase superfamily. TKL Tyr protein kinase family. Post-translationally, tyrosine kinase domain is capable of autophosphorylation, in vitro; however it is also autophosphorylated on serine and threonine residues.

It carries out the reaction L-tyrosyl-[protein] + ATP = O-phospho-L-tyrosyl-[protein] + ADP + H(+). Its function is as follows. Essential for spore differentiation. The protein is Dual specificity protein kinase splA (splA) of Dictyostelium discoideum (Social amoeba).